The following is a 952-amino-acid chain: MSILRSSRLLQILLGIIGVVFTVLLVTPGLVVEYFWLSELDYSSVFWTIRGAQVLLFVLVFLVAGLYFGGNFRVLIGNIPPLWASRWAQEGEAPEVGGEPLTRDRLQRLGYVVAGVLSLLFAAGFSGRWNDLLRFWYAGSYGQADPVYGVDLAFYMLELPFLQSLQSAVVGLAFLGLLALVTGYVIAGQIGIQDGGFEADSGALRHLGANLIFLLLGWAWGFYLDLYELLQEGGGAVYGAGYTDVNVVIPALYVMVAATLVLAGLVGLNLYRRRLRLLGIGGAGYLVLLVGGLVLAPSLVTQLTVLPSELQVERPYLENNIDMTREAYALGDFKERSYPAQPDLPADAVEQNEETIDNVRLWDPRLLIDTYRQLQEIRLYYEFYSVDVDRYMLDGDYRQVMVSPRELTQQLPEDTWDNRHVRFTHGYGSVSNLVAREGSEGSPEFLTQDIPPQSKYESLDVDNPALYYGERTPTYRIVPAGVPGDSLELDYPRSGENKYTRYGGEGGVSVGSFWKQLLFSYYMGDFNILLTDYIQDDSQIQFWNQVEERVRHVAPFLKLDKDPYLVHGDDRHYYIADAYTTSNSFPYSEPIRGQQGYQGTRYIRNSVKVVVDAYNGDVSLYVSNPEDPIIQTYQRIFPDLFQPLDAMPELLQNHIRYPQDFFEIQMERYRRYHQTQPQVFYNNEDLWTRPQEQYANQQRKMEPYYILTDLPGKDDAGLEFMLMLPMTPDGRDNMIGWVAARSDPPNYGEVVVYELPKDRLIRGPNQIESRIDQDTEISQQLSLWDQRGSSVIRGNLIVVPIEESFLYVEPIYLIADEIQIPEMQRVIAATDQDVAMKRTLRQSLNSVLGEQVVETRDQALAQMQQAAQTAQAASPEQVEGLERAKELIQEARDALQGGDFATFGDRFDELQQVLNDVPLPDTTGTVPPPTSSDTTGTMTAPTGDVSEVTGGS.

7 consecutive transmembrane segments (helical) span residues 12–32, 52–72, 109–129, 168–188, 207–227, 247–267, and 277–297; these read ILLG…GLVV, AQVL…GGNF, LGYV…SGRW, AVVG…VIAG, LGAN…LDLY, VVIP…GLVG, and LLGI…VLAP. Residues 917 to 952 form a disordered region; that stretch reads VPLPDTTGTVPPPTSSDTTGTMTAPTGDVSEVTGGS. Polar residues predominate over residues 931–940; sequence SSDTTGTMTA.

The protein belongs to the UPF0182 family.

It localises to the cell membrane. The sequence is that of UPF0182 protein SRU_2225 from Salinibacter ruber (strain DSM 13855 / M31).